Here is a 359-residue protein sequence, read N- to C-terminus: Chorismate synthase (359 aa).

Positions 48 and 54 each coordinate NADP(+). Residues 125-127, 243-244, glycine 283, 298-302, and arginine 324 each bind FMN; these read RSS, NA, and KPTSS.

The protein belongs to the chorismate synthase family. Homotetramer. The cofactor is FMNH2.

It carries out the reaction 5-O-(1-carboxyvinyl)-3-phosphoshikimate = chorismate + phosphate. Its pathway is metabolic intermediate biosynthesis; chorismate biosynthesis; chorismate from D-erythrose 4-phosphate and phosphoenolpyruvate: step 7/7. Functionally, catalyzes the anti-1,4-elimination of the C-3 phosphate and the C-6 proR hydrogen from 5-enolpyruvylshikimate-3-phosphate (EPSP) to yield chorismate, which is the branch point compound that serves as the starting substrate for the three terminal pathways of aromatic amino acid biosynthesis. This reaction introduces a second double bond into the aromatic ring system. The chain is Chorismate synthase from Mannheimia succiniciproducens (strain KCTC 0769BP / MBEL55E).